The chain runs to 295 residues: Small ribosomal subunit protein uS2 (295 aa).

An N-acetylserine modification is found at Ser2. A Phosphoserine modification is found at Ser43. Lys52 is subject to N6-acetyllysine. The interaction with PPP1R16B stretch occupies residues 54–113 (TWEKLLLAARAIVAIENPADVSVISSRNTGQRAVLKFAAATGATPIAGRFTPGTFTNQIQ). Lys89 bears the N6-acetyllysine; alternate mark. Lys89 is covalently cross-linked (Glycyl lysine isopeptide (Lys-Gly) (interchain with G-Cter in SUMO2); alternate). A Phosphothreonine modification is found at Thr97. Laminin-binding regions lie at residues 161–180 (IPCN…MLAR) and 205–229 (RDPE…EFQG). Basic and acidic residues predominate over residues 214-227 (EQAAAEKAVTKEEF). The segment at 214–240 (EQAAAEKAVTKEEFQGEWTAPAPEFTA) is disordered. 4 [DE]-W-[ST] repeats span residues 230–232 (EWT), 247–249 (DWS), 266–268 (DWS), and 275–277 (DWS). Positions 242 to 295 (QPEVADWSEGVQVPSVPIQQFPTEDWSARPFTEDWSAAPTAQATEWVGTTSELS) are laminin-binding. Residues 263–295 (PTEDWSARPFTEDWSAAPTAQATEWVGTTSELS) form a disordered region. The span at 280 to 295 (PTAQATEWVGTTSELS) shows a compositional bias: polar residues.

It belongs to the universal ribosomal protein uS2 family. As to quaternary structure, monomer (37LRP) and homodimer (67LR). Component of the small ribosomal subunit. Mature ribosomes consist of a small (40S) and a large (60S) subunit. The 40S subunit contains about 33 different proteins and 1 molecule of RNA (18S). The 60S subunit contains about 49 different proteins and 3 molecules of RNA (28S, 5.8S and 5S). Interacts with RPS21. Interacts with several laminins including at least LAMB1. Interacts with MDK. The mature dimeric form interacts with PPP1R16B (via its fourth ankyrin repeat). Interacts with PPP1CA only in the presence of PPP1R16B. Acylated. Acylation may be a prerequisite for conversion of the monomeric 37 kDa laminin receptor precursor (37LRP) to the mature dimeric 67 kDa laminin receptor (67LR), and may provide a mechanism for membrane association. Post-translationally, cleaved by stromelysin-3 (ST3) at the cell surface. Cleavage by stromelysin-3 may be a mechanism to alter cell-extracellular matrix interactions.

The protein resides in the cell membrane. It is found in the cytoplasm. Its subcellular location is the nucleus. In terms of biological role, required for the assembly and/or stability of the 40S ribosomal subunit. Required for the processing of the 20S rRNA-precursor to mature 18S rRNA in a late step of the maturation of 40S ribosomal subunits. Also functions as a cell surface receptor for laminin. Plays a role in cell adhesion to the basement membrane and in the consequent activation of signaling transduction pathways. May play a role in cell fate determination and tissue morphogenesis. Also acts as a receptor for several other ligands, including the pathogenic prion protein, viruses, and bacteria. Acts as a PPP1R16B-dependent substrate of PPP1CA. This is Small ribosomal subunit protein uS2 from Ovis aries (Sheep).